The chain runs to 348 residues: Ion-translocating oxidoreductase complex subunit D (348 aa).

Transmembrane regions (helical) follow at residues 20–39, 72–91, and 120–140; these read LMKW…TYFF, ALRD…AIPP, and PFNP…VQMT. Thr187 carries the FMN phosphoryl threonine modification. Transmembrane regions (helical) follow at residues 214 to 234, 241 to 261, 266 to 286, 300 to 320, and 321 to 341; these read LAGV…LVLI, WHIP…FLMF, TASP…FFIA, LVFG…GGFP, and DGVA…DYYT.

Belongs to the NqrB/RnfD family. As to quaternary structure, the complex is composed of six subunits: RnfA, RnfB, RnfC, RnfD, RnfE and RnfG. FMN serves as cofactor.

The protein localises to the cell inner membrane. Part of a membrane-bound complex that couples electron transfer with translocation of ions across the membrane. This Vibrio atlanticus (strain LGP32) (Vibrio splendidus (strain Mel32)) protein is Ion-translocating oxidoreductase complex subunit D.